Consider the following 226-residue polypeptide: ATP synthase F(0) complex subunit a (226 aa).

6 consecutive transmembrane segments (helical) span residues 12–32, 68–88, 97–117, 138–158, 164–184, and 189–209; these read PTMM…ILFP, WALM…LGLL, QLSM…ITGF, IPML…ALAV, ITAG…LMDI, and AFIT…VALI.

This sequence belongs to the ATPase A chain family. As to quaternary structure, component of the ATP synthase complex composed at least of ATP5F1A/subunit alpha, ATP5F1B/subunit beta, ATP5MC1/subunit c (homooctomer), MT-ATP6/subunit a, MT-ATP8/subunit 8, ATP5ME/subunit e, ATP5MF/subunit f, ATP5MG/subunit g, ATP5MK/subunit k, ATP5MJ/subunit j, ATP5F1C/subunit gamma, ATP5F1D/subunit delta, ATP5F1E/subunit epsilon, ATP5PF/subunit F6, ATP5PB/subunit b, ATP5PD/subunit d, ATP5PO/subunit OSCP. ATP synthase complex consists of a soluble F(1) head domain (subunits alpha(3) and beta(3)) - the catalytic core - and a membrane F(0) domain - the membrane proton channel (subunits c, a, 8, e, f, g, k and j). These two domains are linked by a central stalk (subunits gamma, delta, and epsilon) rotating inside the F1 region and a stationary peripheral stalk (subunits F6, b, d, and OSCP). Interacts with DNAJC30; interaction is direct.

Its subcellular location is the mitochondrion inner membrane. The enzyme catalyses H(+)(in) = H(+)(out). Its function is as follows. Subunit a, of the mitochondrial membrane ATP synthase complex (F(1)F(0) ATP synthase or Complex V) that produces ATP from ADP in the presence of a proton gradient across the membrane which is generated by electron transport complexes of the respiratory chain. ATP synthase complex consist of a soluble F(1) head domain - the catalytic core - and a membrane F(1) domain - the membrane proton channel. These two domains are linked by a central stalk rotating inside the F(1) region and a stationary peripheral stalk. During catalysis, ATP synthesis in the catalytic domain of F(1) is coupled via a rotary mechanism of the central stalk subunits to proton translocation. With the subunit c (ATP5MC1), forms the proton-conducting channel in the F(0) domain, that contains two crucial half-channels (inlet and outlet) that facilitate proton movement from the mitochondrial intermembrane space (IMS) into the matrix. Protons are taken up via the inlet half-channel and released through the outlet half-channel, following a Grotthuss mechanism. In Phoca vitulina (Harbor seal), this protein is ATP synthase F(0) complex subunit a.